Consider the following 457-residue polypeptide: Argininosuccinate lyase (457 aa).

It belongs to the lyase 1 family. Argininosuccinate lyase subfamily.

Its subcellular location is the cytoplasm. It carries out the reaction 2-(N(omega)-L-arginino)succinate = fumarate + L-arginine. Its pathway is amino-acid biosynthesis; L-arginine biosynthesis; L-arginine from L-ornithine and carbamoyl phosphate: step 3/3. The protein is Argininosuccinate lyase of Escherichia coli O157:H7.